The sequence spans 794 residues: Alpha-1,3-galactosidase B (794 aa).

The first 57 residues, 1–57 (MEGNLSFSLMEASGRSIFFLIEGIREQSIKNMFSRMFSWSFVVAACLAGLFPAQSQG), serve as a signal peptide directing secretion. PbH1 repeat units lie at residues 468–499 (SEDFHMKGGGVMVRKGTGRVHTAGADATHFSN), 609–631 (YPSVVFRNNIVRNNRARGSLFTT), 632–654 (PERVLVEGNLFDHSSGSAILLAG), 665–686 (CHEVVIRKNTFINNLTSRYQFT), and 707–728 (HRNVLIENNVFKTFDVPLLFAI).

The protein belongs to the glycosyl hydrolase 110 family. B subfamily.

It catalyses the reaction Hydrolysis of terminal, non-reducing branched (1-&gt;3)-alpha-D-galactosidic residues, producing free D-galactose.. The catalysed reaction is Hydrolysis of terminal, non-reducing linear (1-&gt;3)-alpha-D-galactosidic residues, producing free D-galactose.. It carries out the reaction Hydrolysis of terminal, non-reducing alpha-D-galactose residues in alpha-D-galactosides, including galactose oligosaccharides, galactomannans and galactolipids.. Functionally, alpha-galactosidase. Removes both branched alpha-1,3-linked galactose residues of blood group B antigens and linear alpha-1,3-linked galactose structures. In Akkermansia muciniphila (strain ATCC BAA-835 / DSM 22959 / JCM 33894 / BCRC 81048 / CCUG 64013 / CIP 107961 / Muc), this protein is Alpha-1,3-galactosidase B (glaB).